Consider the following 295-residue polypeptide: MTEGVLPGLYLGNFIDAKDLDQLGRNKITHIISIHESPQPLLQDITYLRIPVADTPEVPIKKHFKECINFIHCCRLNGGNCLVHCFAGISRSTTIVTAYVMTVTGLGWRDVLEAIKATRPIANPNPGFRQQLEEFGWASSQKGARHRTSKTSGAQCPPMTSATCLLAARVALLSAALVREATGRTAQRCRLSPRAAAERLLGPPPHVAAGWSPDPKYQICLCFGEEDPGPTQHPKEQLIMADVQVQLRPGSSSCTLSASTERPDGSSTPGNPDGITHLQCSCLHPKRAASSSCTR.

In terms of domain architecture, Tyrosine-protein phosphatase spans 1-141; the sequence is MTEGVLPGLY…LEEFGWASSQ (141 aa). Thr2 carries the N-myristoyl glycine lipid modification. Catalysis depends on Cys85, which acts as the Phosphocysteine intermediate. Residues 251–270 show a composition bias toward polar residues; the sequence is SSSCTLSASTERPDGSSTPG. The tract at residues 251–272 is disordered; it reads SSSCTLSASTERPDGSSTPGNP.

Belongs to the protein-tyrosine phosphatase family. Non-receptor class dual specificity subfamily. As to expression, highly expressed in testis. Expressed in brain; up-regulated in patients with multiple sclerosis gray matter lesions.

The protein localises to the cytoplasm. The protein resides in the cell membrane. It catalyses the reaction O-phospho-L-tyrosyl-[protein] + H2O = L-tyrosyl-[protein] + phosphate. The enzyme catalyses O-phospho-L-seryl-[protein] + H2O = L-seryl-[protein] + phosphate. The catalysed reaction is O-phospho-L-threonyl-[protein] + H2O = L-threonyl-[protein] + phosphate. Functionally, may dephosphorylate MAPK13, ATF2, ERBB3, PDGFRB and SNX6. In terms of biological role, may play a role in the regulation of oligodendrocyte differentiation. May play a role in the regulation of myelin formation. Involved in the regulation of Erk1/2 phosphorylation in Schwann cells; the signaling may be linked to the regulation of myelination. The sequence is that of Dual specificity protein phosphatase 15 from Homo sapiens (Human).